Reading from the N-terminus, the 280-residue chain is UBX domain-containing protein 10 (280 aa).

Positions 41–94 (SAKGRTRPSLQKSQGVEVCAHHIPSPPPAIPYELPSSQKPGACAPKSPNQGASD) are disordered. Phosphoserine is present on serine 87. The 78-residue stretch at 194–271 (DQEPRLLLAV…RIPHKSVLGI (78 aa)) folds into the UBX domain.

It belongs to the UBXN10 family. In terms of assembly, interacts with CLUAP1; the interaction is direct and mediates interaction with the intraflagellar transport complex B (IFT-B). Interacts with VCP; the interaction is direct.

The protein localises to the cell projection. The protein resides in the cilium. In terms of biological role, VCP/p97-binding protein required for ciliogenesis. Acts as a tethering factor that facilitates recruitment of VCP/p97 to the intraflagellar transport complex B (IFT-B) in cilia. UBX domain-containing proteins act as tethering factors for VCP/p97 and may specify substrate specificity of VCP/p97. The polypeptide is UBX domain-containing protein 10 (Homo sapiens (Human)).